The primary structure comprises 63 residues: Cecropin-2 (63 aa).

Positions 1–21 are cleaved as a signal peptide; sequence MNFNKVLVLLAVIFAVFAGQT. Residues 22–23 constitute a propeptide that is removed on maturation; sequence EA. At lysine 62 the chain carries Lysine amide.

Belongs to the cecropin family.

It is found in the secreted. Cecropins have lytic and antibacterial activity against several Gram-positive and Gram-negative bacteria. The protein is Cecropin-2 (CEC2) of Ceratitis capitata (Mediterranean fruit fly).